A 344-amino-acid chain; its full sequence is N-acetyl-gamma-glutamyl-phosphate reductase (344 aa).

C150 is an active-site residue.

It belongs to the NAGSA dehydrogenase family. Type 1 subfamily.

It is found in the cytoplasm. The catalysed reaction is N-acetyl-L-glutamate 5-semialdehyde + phosphate + NADP(+) = N-acetyl-L-glutamyl 5-phosphate + NADPH + H(+). Its pathway is amino-acid biosynthesis; L-arginine biosynthesis; N(2)-acetyl-L-ornithine from L-glutamate: step 3/4. In terms of biological role, catalyzes the NADPH-dependent reduction of N-acetyl-5-glutamyl phosphate to yield N-acetyl-L-glutamate 5-semialdehyde. The chain is N-acetyl-gamma-glutamyl-phosphate reductase from Pseudomonas savastanoi pv. phaseolicola (strain 1448A / Race 6) (Pseudomonas syringae pv. phaseolicola (strain 1448A / Race 6)).